The sequence spans 250 residues: tRNA (guanine-N(7)-)-methyltransferase (250 aa).

Over residues 1–10 the composition is skewed to basic and acidic residues; that stretch reads MTPDDPRDAS. The segment at 1–30 is disordered; the sequence is MTPDDPRDASDASLADATADSASRGHGSFF. Residues 11–24 are compositionally biased toward low complexity; it reads DASLADATADSASR. The S-adenosyl-L-methionine site is built by Glu-79, Glu-104, Asp-131, and Asp-153. Asp-153 is an active-site residue. Residues Lys-157 and Asp-189 each coordinate substrate.

Belongs to the class I-like SAM-binding methyltransferase superfamily. TrmB family.

The catalysed reaction is guanosine(46) in tRNA + S-adenosyl-L-methionine = N(7)-methylguanosine(46) in tRNA + S-adenosyl-L-homocysteine. The protein operates within tRNA modification; N(7)-methylguanine-tRNA biosynthesis. In terms of biological role, catalyzes the formation of N(7)-methylguanine at position 46 (m7G46) in tRNA. The sequence is that of tRNA (guanine-N(7)-)-methyltransferase from Rhodopseudomonas palustris (strain BisA53).